The primary structure comprises 647 residues: Threonine--tRNA ligase (647 aa).

The 63-residue stretch at 1–63 (MDKINITFPD…EEDGSIEIVT (63 aa)) folds into the TGS domain. Residues 242–540 (DHRKIGKELD…LTEETKGAFP (299 aa)) are catalytic. Zn(2+)-binding residues include C336, H387, and H517.

Belongs to the class-II aminoacyl-tRNA synthetase family. Homodimer. Zn(2+) is required as a cofactor.

The protein localises to the cytoplasm. The enzyme catalyses tRNA(Thr) + L-threonine + ATP = L-threonyl-tRNA(Thr) + AMP + diphosphate + H(+). Its function is as follows. Catalyzes the attachment of threonine to tRNA(Thr) in a two-step reaction: L-threonine is first activated by ATP to form Thr-AMP and then transferred to the acceptor end of tRNA(Thr). Also edits incorrectly charged L-seryl-tRNA(Thr). This is Threonine--tRNA ligase from Staphylococcus carnosus (strain TM300).